The following is a 265-amino-acid chain: MKIAIAGASGRMGRMLIETVLNTDGVTLAGALDVPGAAALGQDAGLFLGRETGIKISSDIEAVLSAADCLIDFTRPEGTLAHLAVAKRLGKKMVIGTTGFDAAGKQALADAAKSIGVVFAANMSVGVNATFKLLEVAAKLLSTGYDIEIIEAHHRHKVDAPSGTALAMGEVVAKAIGRDLDECAVYAREGHTGPRDAKSIGFATVRGGDIVGDHTVMFAGIGERIEISHKSSSRQSYADGAVRAARFLADKPSGMFDMQDVLGLK.

NAD(+) is bound by residues 7-12 (GASGRM), aspartate 33, 96-98 (GTT), and 120-123 (AANM). The active-site Proton donor/acceptor is histidine 153. Residue histidine 154 participates in (S)-2,3,4,5-tetrahydrodipicolinate binding. The Proton donor role is filled by lysine 157. (S)-2,3,4,5-tetrahydrodipicolinate is bound at residue 163–164 (GT).

Belongs to the DapB family.

It is found in the cytoplasm. The enzyme catalyses (S)-2,3,4,5-tetrahydrodipicolinate + NAD(+) + H2O = (2S,4S)-4-hydroxy-2,3,4,5-tetrahydrodipicolinate + NADH + H(+). It catalyses the reaction (S)-2,3,4,5-tetrahydrodipicolinate + NADP(+) + H2O = (2S,4S)-4-hydroxy-2,3,4,5-tetrahydrodipicolinate + NADPH + H(+). It participates in amino-acid biosynthesis; L-lysine biosynthesis via DAP pathway; (S)-tetrahydrodipicolinate from L-aspartate: step 4/4. In terms of biological role, catalyzes the conversion of 4-hydroxy-tetrahydrodipicolinate (HTPA) to tetrahydrodipicolinate. This chain is 4-hydroxy-tetrahydrodipicolinate reductase, found in Cupriavidus metallidurans (strain ATCC 43123 / DSM 2839 / NBRC 102507 / CH34) (Ralstonia metallidurans).